A 111-amino-acid polypeptide reads, in one-letter code: Large ribosomal subunit protein uL22 (111 aa).

It belongs to the universal ribosomal protein uL22 family. As to quaternary structure, part of the 50S ribosomal subunit.

This protein binds specifically to 23S rRNA; its binding is stimulated by other ribosomal proteins, e.g. L4, L17, and L20. It is important during the early stages of 50S assembly. It makes multiple contacts with different domains of the 23S rRNA in the assembled 50S subunit and ribosome. In terms of biological role, the globular domain of the protein is located near the polypeptide exit tunnel on the outside of the subunit, while an extended beta-hairpin is found that lines the wall of the exit tunnel in the center of the 70S ribosome. This is Large ribosomal subunit protein uL22 from Clostridium novyi (strain NT).